Here is an 860-residue protein sequence, read N- to C-terminus: DNA mismatch repair protein MutS (860 aa).

Residue 620-627 (GPNMGGKS) coordinates ATP.

The protein belongs to the DNA mismatch repair MutS family.

Functionally, this protein is involved in the repair of mismatches in DNA. It is possible that it carries out the mismatch recognition step. This protein has a weak ATPase activity. This chain is DNA mismatch repair protein MutS, found in Dechloromonas aromatica (strain RCB).